The following is a 159-amino-acid chain: NADH-quinone oxidoreductase subunit B (159 aa).

[4Fe-4S] cluster contacts are provided by Cys-36, Cys-37, Cys-102, and Cys-132.

It belongs to the complex I 20 kDa subunit family. NDH-1 is composed of 14 different subunits. Subunits NuoB, C, D, E, F, and G constitute the peripheral sector of the complex. The cofactor is [4Fe-4S] cluster.

Its subcellular location is the cell inner membrane. It carries out the reaction a quinone + NADH + 5 H(+)(in) = a quinol + NAD(+) + 4 H(+)(out). Its function is as follows. NDH-1 shuttles electrons from NADH, via FMN and iron-sulfur (Fe-S) centers, to quinones in the respiratory chain. The immediate electron acceptor for the enzyme in this species is believed to be ubiquinone. Couples the redox reaction to proton translocation (for every two electrons transferred, four hydrogen ions are translocated across the cytoplasmic membrane), and thus conserves the redox energy in a proton gradient. The chain is NADH-quinone oxidoreductase subunit B from Acidovorax ebreus (strain TPSY) (Diaphorobacter sp. (strain TPSY)).